The chain runs to 600 residues: Aspartate--tRNA(Asp/Asn) ligase (600 aa).

Glu174 lines the L-aspartate pocket. The segment at 198 to 201 (QLFK) is aspartate. Arg220 contributes to the L-aspartate binding site. Residues 220–222 (RDE) and Gln229 contribute to the ATP site. Residue His457 participates in L-aspartate binding. Position 491 (Glu491) interacts with ATP. Arg498 provides a ligand contact to L-aspartate. 543 to 546 (GLDR) is a binding site for ATP.

It belongs to the class-II aminoacyl-tRNA synthetase family. Type 1 subfamily. In terms of assembly, homodimer.

The protein resides in the cytoplasm. The enzyme catalyses tRNA(Asx) + L-aspartate + ATP = L-aspartyl-tRNA(Asx) + AMP + diphosphate. Aspartyl-tRNA synthetase with relaxed tRNA specificity since it is able to aspartylate not only its cognate tRNA(Asp) but also tRNA(Asn). Reaction proceeds in two steps: L-aspartate is first activated by ATP to form Asp-AMP and then transferred to the acceptor end of tRNA(Asp/Asn). The sequence is that of Aspartate--tRNA(Asp/Asn) ligase from Burkholderia pseudomallei (strain 668).